Consider the following 270-residue polypeptide: 4-hydroxy-tetrahydrodipicolinate reductase (270 aa).

NAD(+)-binding positions include 9 to 14 (GSGGRM) and glutamate 35. Arginine 36 is an NADP(+) binding site. Residues 99–101 (GTT) and 123–126 (ASNY) contribute to the NAD(+) site. Histidine 156 (proton donor/acceptor) is an active-site residue. Histidine 157 contributes to the (S)-2,3,4,5-tetrahydrodipicolinate binding site. Lysine 160 functions as the Proton donor in the catalytic mechanism. A (S)-2,3,4,5-tetrahydrodipicolinate-binding site is contributed by 166-167 (GT).

The protein belongs to the DapB family.

The protein resides in the cytoplasm. It catalyses the reaction (S)-2,3,4,5-tetrahydrodipicolinate + NAD(+) + H2O = (2S,4S)-4-hydroxy-2,3,4,5-tetrahydrodipicolinate + NADH + H(+). The enzyme catalyses (S)-2,3,4,5-tetrahydrodipicolinate + NADP(+) + H2O = (2S,4S)-4-hydroxy-2,3,4,5-tetrahydrodipicolinate + NADPH + H(+). The protein operates within amino-acid biosynthesis; L-lysine biosynthesis via DAP pathway; (S)-tetrahydrodipicolinate from L-aspartate: step 4/4. In terms of biological role, catalyzes the conversion of 4-hydroxy-tetrahydrodipicolinate (HTPA) to tetrahydrodipicolinate. The polypeptide is 4-hydroxy-tetrahydrodipicolinate reductase (Histophilus somni (strain 2336) (Haemophilus somnus)).